Here is a 292-residue protein sequence, read N- to C-terminus: NAD kinase (292 aa).

Catalysis depends on Asp-73, which acts as the Proton acceptor. Residues Asp-73–Gly-74, Asn-147–Glu-148, His-158, Arg-175, Asp-177, Thr-188–Ser-193, and Gln-247 contribute to the NAD(+) site.

It belongs to the NAD kinase family. A divalent metal cation is required as a cofactor.

The protein resides in the cytoplasm. The catalysed reaction is NAD(+) + ATP = ADP + NADP(+) + H(+). Its function is as follows. Involved in the regulation of the intracellular balance of NAD and NADP, and is a key enzyme in the biosynthesis of NADP. Catalyzes specifically the phosphorylation on 2'-hydroxyl of the adenosine moiety of NAD to yield NADP. The chain is NAD kinase from Buchnera aphidicola subsp. Schizaphis graminum (strain Sg).